Consider the following 360-residue polypeptide: MSLNRLHIEAFRNITSAQLQPGDGLNVIYGQNGSGKTSILEAIYFLGMGRSFRSHLSQRVINNDADALTLFANMQSAEDESKIGLRRFRSGEIEVKINGDKVKRLSTLAETLPIQVITPESFSLLFEGPKSRRQFIDWGAFHSDPRFYAAWVNVRRILKQRNQLLRDESPYSSIQFWDKEFIRYAELVTEIRKQYVDSLNELLKGIIEEFLPQVDVKVSFTRGWDSKTEYAQLLETQYPRDLATGFTVSGPHKADLRLRVGTLPAQDALSRGQLKLLVCALRIAQGKLLKQQIDKKSIYLVDDLPSELDAQHRKLLLQQLADTGAQVFVTAIEPAAIVDSLITPPSKMFHVEHGRVTVIE.

30 to 37 (GQNGSGKT) is a binding site for ATP.

This sequence belongs to the RecF family.

Its subcellular location is the cytoplasm. Functionally, the RecF protein is involved in DNA metabolism; it is required for DNA replication and normal SOS inducibility. RecF binds preferentially to single-stranded, linear DNA. It also seems to bind ATP. This is DNA replication and repair protein RecF from Shewanella piezotolerans (strain WP3 / JCM 13877).